Reading from the N-terminus, the 481-residue chain is MKPLKLNYFFIGIITLLLALALWPSIPWRSSQDVQLRQILSRGELRISTVNSPLTYAMSNGSPTGLDYELAKRFADYLGVKLVVSSRKNLDELFDDLDGDDADLLAAGLIYNHERLERFRAGPTYYSISQQMVYRLGSPRPKTLDKLQGRLVVTSGSAHAATLRDLKAEKYPQLSWESASDQSTQELLKQVADGKLDYTLGDSVTIGLMQRIHPQLAVAFDLSDEEPVIWYMRRSHDDSLSAALLDFFSQLVEDGTLARLEEKYLGHVGEFDYVDTTTFLSAIDETLPDLRPLFEKYATDIDWKLLAAISYQESHWNPLATSPTGVRGLMMLTRNTAESLNVTDRVDPEQSIRGGAQYMSHMMQKMPDTIPEDEKIWFALASYNMGYAHLLDARKLTEKQKGNPDSWVDVKMRLPMLSQKRYYTQTTYGYARGHEAYNYVENIRRYMVSLEGYLIEKEAKVQQQTQIALGYPAVPLTKVPE.

Residues 1-21 (MKPLKLNYFFIGIITLLLALA) form the signal peptide. A non-LT domain region spans residues 22–268 (LWPSIPWRSS…RLEEKYLGHV (247 aa)). The interval 269 to 481 (GEFDYVDTTT…PAVPLTKVPE (213 aa)) is LT domain. Glu313 is an active-site residue.

In the N-terminal section; belongs to the bacterial solute-binding protein 3 family. This sequence in the C-terminal section; belongs to the transglycosylase Slt family.

Its subcellular location is the cell outer membrane. It catalyses the reaction Exolytic cleavage of the (1-&gt;4)-beta-glycosidic linkage between N-acetylmuramic acid (MurNAc) and N-acetylglucosamine (GlcNAc) residues in peptidoglycan, from either the reducing or the non-reducing ends of the peptidoglycan chains, with concomitant formation of a 1,6-anhydrobond in the MurNAc residue.. Functionally, murein-degrading enzyme that degrades murein glycan strands and insoluble, high-molecular weight murein sacculi, with the concomitant formation of a 1,6-anhydromuramoyl product. Lytic transglycosylases (LTs) play an integral role in the metabolism of the peptidoglycan (PG) sacculus. Their lytic action creates space within the PG sacculus to allow for its expansion as well as for the insertion of various structures such as secretion systems and flagella. This chain is Membrane-bound lytic murein transglycosylase F, found in Pectobacterium atrosepticum (strain SCRI 1043 / ATCC BAA-672) (Erwinia carotovora subsp. atroseptica).